Here is a 118-residue protein sequence, read N- to C-terminus: Large ribosomal subunit protein bL20 (118 aa).

The protein belongs to the bacterial ribosomal protein bL20 family.

Functionally, binds directly to 23S ribosomal RNA and is necessary for the in vitro assembly process of the 50S ribosomal subunit. It is not involved in the protein synthesizing functions of that subunit. This Proteus mirabilis (strain HI4320) protein is Large ribosomal subunit protein bL20.